An 885-amino-acid chain; its full sequence is Translation initiation factor IF-2 (885 aa).

The disordered stretch occupies residues 1–295; that stretch reads MTDNKDDKTI…EKFKRSQMQE (295 aa). A compositionally biased stretch (low complexity) spans 63-77; sequence PVAAAPAAARPAEQR. Residues 78 to 94 show a composition bias toward pro residues; that stretch reads PMPPQPSGRPAPQPQPH. Positions 130–183 are enriched in basic and acidic residues; it reads RDAEEAKRRAEEEVRRRREEEERIAREKEEAARRAAEEAARPAVEAEKVEEKVE. The span at 184-201 shows a compositional bias: low complexity; it reads AATPAVAETRPLSERPAP. The region spanning 383–550 is the tr-type G domain; the sequence is ARPPIVTIMG…AILLQSEILD (168 aa). The interval 392-399 is G1; the sequence is GHVDHGKT. Residue 392 to 399 coordinates GTP; that stretch reads GHVDHGKT. The interval 417-421 is G2; sequence GITQH. The interval 438-441 is G3; it reads DTPG. GTP contacts are provided by residues 438 to 442 and 492 to 495; these read DTPGH and NKID. The interval 492-495 is G4; the sequence is NKID. The tract at residues 528–530 is G5; that stretch reads SAK.

It belongs to the TRAFAC class translation factor GTPase superfamily. Classic translation factor GTPase family. IF-2 subfamily.

It localises to the cytoplasm. One of the essential components for the initiation of protein synthesis. Protects formylmethionyl-tRNA from spontaneous hydrolysis and promotes its binding to the 30S ribosomal subunits. Also involved in the hydrolysis of GTP during the formation of the 70S ribosomal complex. The sequence is that of Translation initiation factor IF-2 from Sinorhizobium medicae (strain WSM419) (Ensifer medicae).